The primary structure comprises 332 residues: D-lactate dehydrogenase (332 aa).

NAD(+)-binding positions include 155–156 (RI), aspartate 175, 206–207 (VP), asparagine 212, 233–235 (FAR), and aspartate 259. Arginine 235 is a catalytic residue. Residue glutamate 264 is part of the active site. Residue histidine 296 is the Proton donor of the active site.

The protein belongs to the D-isomer specific 2-hydroxyacid dehydrogenase family.

The catalysed reaction is (R)-lactate + NAD(+) = pyruvate + NADH + H(+). The polypeptide is D-lactate dehydrogenase (ldhD) (Lactiplantibacillus plantarum (strain ATCC BAA-793 / NCIMB 8826 / WCFS1) (Lactobacillus plantarum)).